The primary structure comprises 115 residues: Basic leucine zipper transcriptional factor ATF-like (115 aa).

The segment at 1–57 is disordered; sequence MQQEPDRNEQGYCSSPPSSNKQDSSDDTKKIQRREKNRIAAQKSRQRQTQKADSLHI. A bZIP domain is found at 27–90; sequence DTKKIQRREK…KYLTCVLSTH (64 aa). The tract at residues 29–51 is basic motif; that stretch reads KKIQRREKNRIAAQKSRQRQTQK. A leucine-zipper region spans residues 55–83; it reads LHIESENLERLNSALRGEISGLREELKYL.

This sequence belongs to the bZIP family.

Its subcellular location is the nucleus. It localises to the cytoplasm. In terms of biological role, AP-1 family transcription factor that controls the differentiation of lineage-specific cells in the immune system: specifically mediates the differentiation of T-helper 17 cells (Th17), follicular T-helper cells (TfH), CD8(+) dendritic cells and class-switch recombination (CSR) in B-cells. The sequence is that of Basic leucine zipper transcriptional factor ATF-like (batf) from Xenopus tropicalis (Western clawed frog).